The primary structure comprises 322 residues: Eukaryotic translation initiation factor 3 subunit I (322 aa).

WD repeat units lie at residues Gly-4 to Thr-43, Gly-46 to Ser-85, Met-141 to Asp-180, Asp-184 to Ser-223, and Gly-281 to Glu-322.

It belongs to the eIF-3 subunit I family. As to quaternary structure, component of the eukaryotic translation initiation factor 3 (eIF-3) complex. The eIF-3 complex interacts with pix.

The protein localises to the cytoplasm. Its function is as follows. Component of the eukaryotic translation initiation factor 3 (eIF-3) complex, which is involved in protein synthesis of a specialized repertoire of mRNAs and, together with other initiation factors, stimulates binding of mRNA and methionyl-tRNAi to the 40S ribosome. The eIF-3 complex specifically targets and initiates translation of a subset of mRNAs involved in cell proliferation. The sequence is that of Eukaryotic translation initiation factor 3 subunit I from Drosophila yakuba (Fruit fly).